The primary structure comprises 240 residues: Protein OXIDATIVE STRESS 3 LIKE 4 (240 aa).

The tract at residues 1-128 (MELMAKPTFS…SKSFGNLGEI (128 aa)) is disordered. The segment covering 51–66 (WSGQTADYSSDSSSIG) has biased composition (polar residues). Over residues 70–84 (DSEEDEEESENENDD) the composition is skewed to acidic residues. The short motif at 142–150 (NKRRRLQIC) is the Nuclear localization signal element. Residues 163 to 207 (NPKSMPLLPVNEDEDDDDEDDDEEDLKSGFDENKSSSDEEGVKKV) are disordered. Positions 173–187 (NEDEDDDDEDDDEED) are enriched in acidic residues. A compositionally biased stretch (basic and acidic residues) spans 188 to 205 (LKSGFDENKSSSDEEGVK). A kinase-inducible domain (KID) region spans residues 202–229 (EGVKKVVVRKGSFKNRAYKSRSCFALSD). S213 bears the Phosphoserine mark.

Interacts with HDA19; Ser-213 is critical for this interaction.

Its subcellular location is the nucleus. In terms of biological role, transcription activator which may regulates gene expression through interaction with the histone deacetylase HDA19. Promotes slightly the tolerance to cadmium (Cd) and to oxidizing chemicals (e.g. diamide and tert-butyl hydroperoxide (t-BOOH)). In Arabidopsis thaliana (Mouse-ear cress), this protein is Protein OXIDATIVE STRESS 3 LIKE 4.